We begin with the raw amino-acid sequence, 391 residues long: PPE family protein PPE15 (391 aa).

A eukaryotic-like SH3 domain region spans residues 312–367 (LGEATLVGRLSVPAAWSTAAPATTAGATALEGSGWTVAAEEAGPVTGMMPGMASAA).

It belongs to the mycobacterial PPE family. Forms a heterodimer with PE8. The dimer forms a 1:1:1 heterotrimeric complex with EspG5. PPE15 interacts directly with EspG5. Interacts via the C-terminal region with host Toll-like receptor 4 (TLR4). Interacts, also via the C-terminal region, with two cytosolic subunits of the host NOX complex, p47phox (NCF1) and p67phox (NCF2).

It localises to the secreted. Its subcellular location is the host mitochondrion. May play a critical role in the homeostasis of triacylglycerol-containing lipid droplets in M.tuberculosis and influence the entry of the pathogen into a dormant state. Is recognized by host TLR4 receptor at the macrophage cell surface, which modulates the host immune response, induces mitochondrial stress and perturbations, and induces macrophage apoptosis leading to pathogen persistence. Also downregulates NOX-mediated reactive oxygen species (ROS) generation in THP1 macrophages, which increases intracellular survival of bacteria. PPE15 interacts with two subunits of the host NADPH oxidase (NOX) complex in the cytosol of macrophages and prevents their migration to the membrane, which inhibits the assembly of the NOX complex at the plasma membrane of THP1 macrophages. This leads to reduced NOX activity and diminished ROS generation. This chain is PPE family protein PPE15 (PPE15), found in Mycobacterium tuberculosis (strain CDC 1551 / Oshkosh).